A 320-amino-acid polypeptide reads, in one-letter code: L-lactate dehydrogenase (320 aa).

Residues 15–16 (FV), aspartate 37, lysine 42, tyrosine 68, and 82–83 (GA) contribute to the NAD(+) site. Substrate contacts are provided by residues glutamine 85, arginine 91, and 123–126 (NPVD). Residues 121-123 (ATN) and serine 146 each bind NAD(+). 151–154 (DSAR) lines the substrate pocket. Beta-D-fructose 1,6-bisphosphate contacts are provided by residues arginine 156 and 168-172 (QNVHA). The active-site Proton acceptor is the histidine 178. Residue tyrosine 223 is modified to Phosphotyrosine. Position 232 (threonine 232) interacts with substrate.

Belongs to the LDH/MDH superfamily. LDH family. In terms of assembly, homotetramer.

It localises to the cytoplasm. It carries out the reaction (S)-lactate + NAD(+) = pyruvate + NADH + H(+). The protein operates within fermentation; pyruvate fermentation to lactate; (S)-lactate from pyruvate: step 1/1. Its activity is regulated as follows. Allosterically activated by fructose 1,6-bisphosphate (FBP). Catalyzes the conversion of lactate to pyruvate. The sequence is that of L-lactate dehydrogenase from Bacillus subtilis (strain 168).